The primary structure comprises 229 residues: Ribose-5-phosphate isomerase A (229 aa).

Substrate contacts are provided by residues 28 to 31, 85 to 88, and 98 to 101; these read TGST, DGAD, and KGRG. Glu-107 serves as the catalytic Proton acceptor. Residue Lys-125 coordinates substrate.

This sequence belongs to the ribose 5-phosphate isomerase family. Homodimer.

It catalyses the reaction aldehydo-D-ribose 5-phosphate = D-ribulose 5-phosphate. Its pathway is carbohydrate degradation; pentose phosphate pathway; D-ribose 5-phosphate from D-ribulose 5-phosphate (non-oxidative stage): step 1/1. In terms of biological role, catalyzes the reversible conversion of ribose-5-phosphate to ribulose 5-phosphate. This Pyrococcus furiosus (strain ATCC 43587 / DSM 3638 / JCM 8422 / Vc1) protein is Ribose-5-phosphate isomerase A.